The chain runs to 221 residues: Probable N-acetyl-alpha-D-glucosaminyl L-malate deacetylase 2 (221 aa).

Zn(2+) is bound by residues H11, D14, and H125.

The protein belongs to the PIGL family. Zn(2+) is required as a cofactor.

It carries out the reaction (S)-malyl N-acetyl-alpha-D-glucosaminide + H2O = (S)-malyl alpha-D-glucosaminide + acetate. Its function is as follows. Involved in bacillithiol (BSH) biosynthesis. Catalyzes the second step of the pathway, the deacetylation of N-acetylglucosaminylmalate (GlcNAc-Mal) to glucosamine malate (GlcN-Mal). This is Probable N-acetyl-alpha-D-glucosaminyl L-malate deacetylase 2 from Bacillus subtilis (strain 168).